The chain runs to 336 residues: Tryptophan--tRNA ligase (336 aa).

ATP contacts are provided by residues 15 to 17 (QPT) and 24 to 25 (GN). The 'HIGH' region motif lies at 16-25 (PTSDSLHLGN). An L-tryptophan-binding site is contributed by Asp141. ATP-binding positions include 153-155 (GED), Ile192, and 201-205 (KMSKS). The 'KMSKS' region motif lies at 201 to 205 (KMSKS).

Belongs to the class-I aminoacyl-tRNA synthetase family. In terms of assembly, homodimer.

The protein localises to the cytoplasm. The catalysed reaction is tRNA(Trp) + L-tryptophan + ATP = L-tryptophyl-tRNA(Trp) + AMP + diphosphate + H(+). In terms of biological role, catalyzes the attachment of tryptophan to tRNA(Trp). This is Tryptophan--tRNA ligase from Mycobacterium tuberculosis (strain CDC 1551 / Oshkosh).